Consider the following 505-residue polypeptide: Phosphomevalonate kinase, peroxisomal (505 aa).

Alanine 2 carries the post-translational modification N-acetylalanine. The Peroxisomal targeting signal PTS2 signature appears at 57-65 (DVKLTSPQL). Position 177–187 (177–187 (VAKTGLGSSAA)) interacts with ATP.

Belongs to the GHMP kinase family. Mevalonate kinase subfamily.

The protein localises to the peroxisome. It carries out the reaction (R)-5-phosphomevalonate + ATP = (R)-5-diphosphomevalonate + ADP. It participates in isoprenoid biosynthesis; isopentenyl diphosphate biosynthesis via mevalonate pathway; isopentenyl diphosphate from (R)-mevalonate: step 2/3. This chain is Phosphomevalonate kinase, peroxisomal, found in Arabidopsis thaliana (Mouse-ear cress).